The sequence spans 572 residues: Delta-1-pyrroline-5-carboxylate dehydrogenase, mitochondrial (572 aa).

Position 300-305 (300-305) interacts with NAD(+); the sequence is GQISTR. The Proton acceptor role is filled by Glu-320. Cys-354 functions as the Nucleophile in the catalytic mechanism.

The protein belongs to the aldehyde dehydrogenase family.

It is found in the mitochondrion matrix. The enzyme catalyses L-glutamate 5-semialdehyde + NAD(+) + H2O = L-glutamate + NADH + 2 H(+). It functions in the pathway amino-acid degradation; L-proline degradation into L-glutamate; L-glutamate from L-proline: step 2/2. In Emericella nidulans (strain FGSC A4 / ATCC 38163 / CBS 112.46 / NRRL 194 / M139) (Aspergillus nidulans), this protein is Delta-1-pyrroline-5-carboxylate dehydrogenase, mitochondrial (prnC).